The sequence spans 152 residues: MRILIDGDACPGKYIIENIARENDIEVIIYCDTNHILKSNYSTVVTVDSGFQSVDMVIVNKVRSGDIVVSQDYGVAAMVLGKKAYAINPKGYIYHEGNMDKLLFERYISSKVRRTGGRTSNPKKRTKEDDKRLRENLFQLILNGKVYKGEDW.

The protein belongs to the UPF0178 family.

In Clostridium kluyveri (strain ATCC 8527 / DSM 555 / NBRC 12016 / NCIMB 10680 / K1), this protein is UPF0178 protein CKL_3490.